We begin with the raw amino-acid sequence, 151 residues long: Deoxyuridine 5'-triphosphate nucleotidohydrolase (151 aa).

Substrate contacts are provided by residues 70–72 (RSG), Asn-83, 87–89 (LID), and Met-97.

This sequence belongs to the dUTPase family. The cofactor is Mg(2+).

It carries out the reaction dUTP + H2O = dUMP + diphosphate + H(+). The protein operates within pyrimidine metabolism; dUMP biosynthesis; dUMP from dCTP (dUTP route): step 2/2. Functionally, this enzyme is involved in nucleotide metabolism: it produces dUMP, the immediate precursor of thymidine nucleotides and it decreases the intracellular concentration of dUTP so that uracil cannot be incorporated into DNA. This is Deoxyuridine 5'-triphosphate nucleotidohydrolase from Pseudomonas putida (strain ATCC 700007 / DSM 6899 / JCM 31910 / BCRC 17059 / LMG 24140 / F1).